Consider the following 416-residue polypeptide: Serine hydroxymethyltransferase (416 aa).

(6S)-5,6,7,8-tetrahydrofolate is bound by residues Leu-120 and 124 to 126 (GHL). Lys-230 is modified (N6-(pyridoxal phosphate)lysine). Glu-246 contacts (6S)-5,6,7,8-tetrahydrofolate.

It belongs to the SHMT family. In terms of assembly, homodimer. Pyridoxal 5'-phosphate serves as cofactor.

Its subcellular location is the cytoplasm. The enzyme catalyses (6R)-5,10-methylene-5,6,7,8-tetrahydrofolate + glycine + H2O = (6S)-5,6,7,8-tetrahydrofolate + L-serine. It participates in one-carbon metabolism; tetrahydrofolate interconversion. Its pathway is amino-acid biosynthesis; glycine biosynthesis; glycine from L-serine: step 1/1. Functionally, catalyzes the reversible interconversion of serine and glycine with tetrahydrofolate (THF) serving as the one-carbon carrier. This reaction serves as the major source of one-carbon groups required for the biosynthesis of purines, thymidylate, methionine, and other important biomolecules. Also exhibits THF-independent aldolase activity toward beta-hydroxyamino acids, producing glycine and aldehydes, via a retro-aldol mechanism. This is Serine hydroxymethyltransferase from Onion yellows phytoplasma (strain OY-M).